A 380-amino-acid chain; its full sequence is Cytochrome b (380 aa).

The next 4 membrane-spanning stretches (helical) occupy residues 33–53 (LGSL…FLAM), 77–98 (WVIR…FLHI), 113–133 (WNIG…GYVL), and 178–198 (FFTF…LHLL). His83 and His97 together coordinate heme b. 2 residues coordinate heme b: His182 and His196. His201 serves as a coordination point for a ubiquinone. Helical transmembrane passes span 226–246 (TKDI…VLFS), 288–308 (LGGV…PMLH), 320–340 (LSQL…WIGG), and 347–367 (FITI…ILVP).

It belongs to the cytochrome b family. As to quaternary structure, the cytochrome bc1 complex contains 11 subunits: 3 respiratory subunits (MT-CYB, CYC1 and UQCRFS1), 2 core proteins (UQCRC1 and UQCRC2) and 6 low-molecular weight proteins (UQCRH/QCR6, UQCRB/QCR7, UQCRQ/QCR8, UQCR10/QCR9, UQCR11/QCR10 and a cleavage product of UQCRFS1). This cytochrome bc1 complex then forms a dimer. Heme b is required as a cofactor.

It is found in the mitochondrion inner membrane. In terms of biological role, component of the ubiquinol-cytochrome c reductase complex (complex III or cytochrome b-c1 complex) that is part of the mitochondrial respiratory chain. The b-c1 complex mediates electron transfer from ubiquinol to cytochrome c. Contributes to the generation of a proton gradient across the mitochondrial membrane that is then used for ATP synthesis. In Nomascus leucogenys (Northern white-cheeked gibbon), this protein is Cytochrome b (MT-CYB).